The chain runs to 191 residues: Pyridoxal 5'-phosphate synthase subunit PdxT (191 aa).

52–54 (GES) is an L-glutamine binding site. Residue cysteine 81 is the Nucleophile of the active site. L-glutamine-binding positions include arginine 108 and 136 to 137 (IR). Residues histidine 172 and glutamate 174 each act as charge relay system in the active site.

This sequence belongs to the glutaminase PdxT/SNO family. As to quaternary structure, in the presence of PdxS, forms a dodecamer of heterodimers. Only shows activity in the heterodimer.

The enzyme catalyses aldehydo-D-ribose 5-phosphate + D-glyceraldehyde 3-phosphate + L-glutamine = pyridoxal 5'-phosphate + L-glutamate + phosphate + 3 H2O + H(+). It carries out the reaction L-glutamine + H2O = L-glutamate + NH4(+). It participates in cofactor biosynthesis; pyridoxal 5'-phosphate biosynthesis. Functionally, catalyzes the hydrolysis of glutamine to glutamate and ammonia as part of the biosynthesis of pyridoxal 5'-phosphate. The resulting ammonia molecule is channeled to the active site of PdxS. The protein is Pyridoxal 5'-phosphate synthase subunit PdxT of Actinobacillus pleuropneumoniae serotype 7 (strain AP76).